The primary structure comprises 1966 residues: Dedicator of cytokinesis protein 4 (1966 aa).

One can recognise an SH3 domain in the interval 6 to 67 (EHEKYGVVIA…PSSYVHLKNA (62 aa)). At Tyr167 the chain carries Phosphotyrosine. At Thr193 the chain carries Phosphothreonine. The C2 DOCK-type domain occupies 401-574 (RNDLYITIER…ESFCITSFLC (174 aa)). The DOCKER domain occupies 1190–1596 (KTELNKEEMY…LGIQEFSACM (407 aa)). Phosphoserine is present on residues Ser1599, Ser1607, Ser1614, Ser1618, Ser1620, and Ser1631. Disordered stretches follow at residues 1648-1729 (SQAS…IYPT) and 1742-1966 (IGDG…VSQL). Residues 1672-1703 (PSPSTSSLSSTHSASPNVTSSAPSSARASPLL) show a composition bias toward low complexity. Ser1769 is subject to Phosphoserine. The SH3-binding motif lies at 1788-1794 (PPVPPRP). A compositionally biased stretch (polar residues) spans 1795-1809 (TQTASPARHTTSVSP). Residues 1838–1863 (SNSPVLSGSYSSGISSLSRCSTSETS) show a composition bias toward low complexity. The segment covering 1864 to 1873 (GFENQVNEQS) has biased composition (polar residues). A compositionally biased stretch (basic and acidic residues) spans 1941 to 1954 (SHLENGARRTDPGP).

Belongs to the DOCK family. Interacts with nucleotide-free Rap1; functions as a guanine nucleotide exchange factor (GEF) for Rap1. Interacts (via DOCKER domain) with RAC1; functions as a guanine nucleotide exchange factor (GEF) for RAC1. Interacts with the SH3 domain of CRK. Interacts with FASLG. Interacts with ELMO2 and EPHA2; mediates activation of RAC1 by EPHA2. Interacts with USH1C (via PDZ 1 domain). As to expression, widely expressed at low level. Highly expressed in skeletal muscle, prostate and ovary. May be specifically expressed in the brain and eye.

The protein localises to the cell membrane. The protein resides in the cell projection. It localises to the cytoplasm. It is found in the cytosol. Functions as a guanine nucleotide exchange factor (GEF) that promotes the exchange of GDP to GTP, converting inactive GDP-bound small GTPases into their active GTP-bound form. Involved in regulation of adherens junction between cells. Plays a role in cell migration. Functionally, has a higher guanine nucleotide exchange factor activity compared to other isoforms. The chain is Dedicator of cytokinesis protein 4 (DOCK4) from Homo sapiens (Human).